Consider the following 185-residue polypeptide: Acireductone dioxygenase (185 aa).

Residues His-97, His-99, Glu-103, and His-141 each coordinate Fe(2+). Positions 97, 99, 103, and 141 each coordinate Ni(2+).

Belongs to the acireductone dioxygenase (ARD) family. As to quaternary structure, monomer. Fe(2+) is required as a cofactor. It depends on Ni(2+) as a cofactor.

The enzyme catalyses 1,2-dihydroxy-5-(methylsulfanyl)pent-1-en-3-one + O2 = 3-(methylsulfanyl)propanoate + CO + formate + 2 H(+). The catalysed reaction is 1,2-dihydroxy-5-(methylsulfanyl)pent-1-en-3-one + O2 = 4-methylsulfanyl-2-oxobutanoate + formate + 2 H(+). It functions in the pathway amino-acid biosynthesis; L-methionine biosynthesis via salvage pathway; L-methionine from S-methyl-5-thio-alpha-D-ribose 1-phosphate: step 5/6. Catalyzes 2 different reactions between oxygen and the acireductone 1,2-dihydroxy-3-keto-5-methylthiopentene (DHK-MTPene) depending upon the metal bound in the active site. Fe-containing acireductone dioxygenase (Fe-ARD) produces formate and 2-keto-4-methylthiobutyrate (KMTB), the alpha-ketoacid precursor of methionine in the methionine recycle pathway. Ni-containing acireductone dioxygenase (Ni-ARD) produces methylthiopropionate, carbon monoxide and formate, and does not lie on the methionine recycle pathway. The sequence is that of Acireductone dioxygenase from Stenotrophomonas maltophilia (strain K279a).